The following is a 410-amino-acid chain: Argininosuccinate synthase (410 aa).

Residues 14–22 and Ala-41 each bind ATP; that span reads AYSGGLDTS. L-citrulline is bound by residues Tyr-92 and Ser-97. Position 122 (Gly-122) interacts with ATP. L-aspartate contacts are provided by Thr-124, Asn-128, and Asp-129. L-citrulline is bound at residue Asn-128. L-citrulline-binding residues include Arg-132, Ser-183, Ser-192, Glu-268, and Tyr-280.

This sequence belongs to the argininosuccinate synthase family. Type 1 subfamily. Homotetramer.

It localises to the cytoplasm. The catalysed reaction is L-citrulline + L-aspartate + ATP = 2-(N(omega)-L-arginino)succinate + AMP + diphosphate + H(+). The protein operates within amino-acid biosynthesis; L-arginine biosynthesis; L-arginine from L-ornithine and carbamoyl phosphate: step 2/3. In Parvibaculum lavamentivorans (strain DS-1 / DSM 13023 / NCIMB 13966), this protein is Argininosuccinate synthase.